The primary structure comprises 667 residues: Transcription factor 4 (667 aa).

An essential for MYOD1 inhibition region spans residues 1-83 (MHHQQRMAAL…GTPYDHMTSR (83 aa)). The 9aaTAD signature appears at 18–26 (DLLDFSAMF). Disordered stretches follow at residues 24 to 245 (AMFS…LGNS), 263 to 321 (LSYP…SQTG), 336 to 379 (HTNN…EGPL), 466 to 570 (SLLP…MANN), and 634 to 667 (KRREEEKVSSEPPPLSLAGPHPGMGDASNHMGQM). Residues 29–49 (PVSSGKNGPTSLASGHFTGSN) are compositionally biased toward polar residues. 3 positions are modified to phosphoserine: Ser66, Ser87, and Ser92. 4 stretches are compositionally biased toward polar residues: residues 107–126 (GSYSSYGRESNLQGCHQQSL), 137–155 (GTLSPTKPGSQYYQYSSNN), 205–216 (KPATSTFPSSFF), and 266–306 (PSHS…TDSI). Residues 337 to 348 (TNNSFSSNPSTP) show a composition bias toward low complexity. Over residues 365 to 374 (NGGQASSSPN) the composition is skewed to polar residues. The residue at position 372 (Ser372) is a Phosphoserine. Positions 379–400 (LHSLQSRIEDRLERLDDAIHVL) are leucine-zipper. Composition is skewed to low complexity over residues 467-480 (LLPNQVPVPQLPVQ) and 503-512 (GQSVSSGSSE). Ser515 carries the phosphoserine modification. Basic and acidic residues-rich tracts occupy residues 527-542 (KSSEDKKLDDDKKDIK) and 555-570 (PEQKAEREKERRMANN). One can recognise a bHLH domain in the interval 564–617 (ERRMANNARERLRVRDINEAFKELGRMVQLHLKSDKPQTKLLILHQAVAVILSL). Residues 619–642 (QQVRERNLNPKAACLKRREEEKVS) are class A specific domain.

Efficient DNA binding requires dimerization with another bHLH protein. Forms homo- or heterooligomers with myogenin. Interacts with HIVEP2. Interacts with NEUROD2. Interacts with AGBL1. Interacts with BHLHA9. As to expression, expressed in adult heart, brain, placenta, skeletal muscle and to a lesser extent in the lung. In developing embryonic tissues, expression mostly occurs in the brain.

Its subcellular location is the nucleus. Transcription factor that binds to the immunoglobulin enhancer Mu-E5/KE5-motif. Involved in the initiation of neuronal differentiation. Activates transcription by binding to the E box (5'-CANNTG-3'). Binds to the E-box present in the somatostatin receptor 2 initiator element (SSTR2-INR) to activate transcription. Preferentially binds to either 5'-ACANNTGT-3' or 5'-CCANNTGG-3'. The polypeptide is Transcription factor 4 (TCF4) (Homo sapiens (Human)).